Here is a 643-residue protein sequence, read N- to C-terminus: DNA gyrase subunit B (643 aa).

One can recognise a Toprim domain in the interval 428–542 (SEIFLVEGDS…AGYVYIAQPP (115 aa)). Residues Glu434, Asp507, and Asp509 each contribute to the Mg(2+) site.

It belongs to the type II topoisomerase GyrB family. Heterotetramer, composed of two GyrA and two GyrB chains. In the heterotetramer, GyrA contains the active site tyrosine that forms a transient covalent intermediate with DNA, while GyrB binds cofactors and catalyzes ATP hydrolysis. The cofactor is Mg(2+). It depends on Mn(2+) as a cofactor. Requires Ca(2+) as cofactor.

Its subcellular location is the cytoplasm. It catalyses the reaction ATP-dependent breakage, passage and rejoining of double-stranded DNA.. A type II topoisomerase that negatively supercoils closed circular double-stranded (ds) DNA in an ATP-dependent manner to modulate DNA topology and maintain chromosomes in an underwound state. Negative supercoiling favors strand separation, and DNA replication, transcription, recombination and repair, all of which involve strand separation. Also able to catalyze the interconversion of other topological isomers of dsDNA rings, including catenanes and knotted rings. Type II topoisomerases break and join 2 DNA strands simultaneously in an ATP-dependent manner. In Staphylococcus epidermidis (strain ATCC 35984 / DSM 28319 / BCRC 17069 / CCUG 31568 / BM 3577 / RP62A), this protein is DNA gyrase subunit B.